The following is a 122-amino-acid chain: Cytochrome b-c1 complex subunit 7-1, mitochondrial (122 aa).

Belongs to the UQCRB/QCR7 family. Component of the ubiquinol-cytochrome c oxidoreductase (cytochrome b-c1 complex, complex III, CIII), a multisubunit enzyme composed of 10 subunits. The complex is composed of 3 respiratory subunits cytochrome b (MT-CYB), cytochrome c1 (CYC1-1 or CYC1-2) and Rieske protein (UCR1-1 or UCR1-2), 2 core protein subunits MPPalpha1 (or MPPalpha2) and MPPB, and 5 low-molecular weight protein subunits QCR7-1 (or QCR7-2), UCRQ-1 (or UCRQ-2), QCR9, UCRY and probably QCR6-1 (or QCR6-2). The complex exists as an obligatory dimer and forms supercomplexes (SCs) in the inner mitochondrial membrane with NADH-ubiquinone oxidoreductase (complex I, CI), resulting in different assemblies (supercomplexes SCI(1)III(2) and SCI(2)III(4)).

The protein localises to the mitochondrion inner membrane. In terms of biological role, component of the ubiquinol-cytochrome c oxidoreductase, a multisubunit transmembrane complex that is part of the mitochondrial electron transport chain which drives oxidative phosphorylation. The respiratory chain contains 3 multisubunit complexes succinate dehydrogenase (complex II, CII), ubiquinol-cytochrome c oxidoreductase (cytochrome b-c1 complex, complex III, CIII) and cytochrome c oxidase (complex IV, CIV), that cooperate to transfer electrons derived from NADH and succinate to molecular oxygen, creating an electrochemical gradient over the inner membrane that drives transmembrane transport and the ATP synthase. The cytochrome b-c1 complex catalyzes electron transfer from ubiquinol to cytochrome c, linking this redox reaction to translocation of protons across the mitochondrial inner membrane, with protons being carried across the membrane as hydrogens on the quinol. In the process called Q cycle, 2 protons are consumed from the matrix, 4 protons are released into the intermembrane space and 2 electrons are passed to cytochrome c. The protein is Cytochrome b-c1 complex subunit 7-1, mitochondrial (QCR7-1) of Arabidopsis thaliana (Mouse-ear cress).